Consider the following 744-residue polypeptide: Prestin (744 aa).

The Cytoplasmic segment spans residues Met1–Lys75. A helical membrane pass occupies residues Phe76 to Ala105. Residues Ala106–Pro108 are Extracellular-facing. A helical transmembrane segment spans residues Pro109–Phe126. Residues Gly127–Phe137 lie on the Cytoplasmic side of the membrane. Residues Ala138–Leu151 form a helical membrane-spanning segment. At Val152–Thr168 the chain is on the extracellular side. The short motif at Ile158–Thr168 is the Involved in motor function element. N-linked (GlcNAc...) asparagine glycosylation is found at Asn163 and Asn166. A helical transmembrane segment spans residues Glu169–Cys196. Topologically, residues Arg197–Thr206 are cytoplasmic. A helical membrane pass occupies residues Glu207–Phe230. The Extracellular segment spans residues Gly231–Phe241. The helical intramembrane region spans Ser242–Asn253. Topologically, residues Val254–Asn258 are extracellular. A helical transmembrane segment spans residues Val259 to Phe282. The Cytoplasmic portion of the chain corresponds to Lys283–Pro291. A helical transmembrane segment spans residues Leu292 to Phe307. Topologically, residues Asn308 to Asp332 are extracellular. A helical transmembrane segment spans residues Thr333 to Tyr367. The Cytoplasmic segment spans residues Gln368–Asp370. The helical transmembrane segment at Gly371–Phe388 threads the bilayer. Residues Gln389–Ser396 are Extracellular-facing. A helical membrane pass occupies residues Leu397–Thr406. Ser398 provides a ligand contact to salicylate. Residues Gly407–Thr410 are Cytoplasmic-facing. The chain crosses the membrane as a helical span at residues Gln411–Phe432. The Extracellular segment spans residues Glu433–Pro436. Residues Gln437–Thr464 form a helical membrane-spanning segment. Position 465 (Ser465) is a topological domain, cytoplasmic. Residues Lys466–Phe481 form a helical membrane-spanning segment. At Leu482–Gly483 the chain is on the extracellular side. The helical transmembrane segment at Leu484–Gln504 threads the bilayer. Residues Ser505 to Ala718 are extended region for STAS domain. Topologically, residues Ser505 to Ala744 are cytoplasmic. One can recognise an STAS domain in the interval Ala525 to Ser713. The segment at Ala720–Ala744 is disordered.

Belongs to the SLC26A/SulP transporter (TC 2.A.53) family. In terms of assembly, homodimer. Interacts (via STAS domain) with CALM; this interaction is calcium-dependent and the STAS domain interacts with only one lobe of CALM which is an elongated conformation. Interacts with MYH1. As to expression, expressed in the outer hair cells (OHC) of the organ of Corti of the inner ear. Also weak expression in brain and testis. Very weakly expressed in heart, spleen, muscle and lactating mammary glands. Expressed in cardiac myocytes (at protein level), both in the surface sarcolemma and along the t-tubule. Weakly expressed in skeletal muscle cells (at protein level).

The protein localises to the lateral cell membrane. The catalysed reaction is 2 hydrogencarbonate(in) + chloride(out) = 2 hydrogencarbonate(out) + chloride(in). Functionally, voltage-sensitive motor protein that drives outer hair cell (OHC) electromotility (eM) and participates in sound amplification in the hearing organ. Converts changes in the transmembrane electric potential into mechanical displacements resulting in the coupling of its expansion to movement of a charged voltage sensor across the lipid membrane. The nature of the voltage sensor is not completely clear, and two models compete. In the first model, acts as an incomplete transporter where intracellular chloride anion acts as extrinsic voltage sensor that drives conformational change in the protein which is sufficient to produce a length change in the plane of the membrane and hence in the length of the OHC. The second model in which multiple charged amino acid residues are distributed at the intracellular and extracellular membrane interfaces that form an intrinsic voltage sensor, whose movement produces the non-linear capacitance (NLC). However, the effective voltage sensor may be the result of a hybrid voltage sensor, assembled from intrinsic charge (charged residues) and extrinsic charge (bound anion). Notably, binding of anions to the anion-binding pocket partially neutralizes the intrinsic positive charge rather than to form an electrically negative sensor, therefore remaining charge may serve as voltage sensor that, after depolarization, moves from down (expanded state) to up (contracted) conformation, which is accompanied by an eccentric contraction of the intermembrane cross-sectional area of the protein as well as a major increase in the hydrophobic thickness of the protein having as consequences the plasma membrane thickening and the cell contraction after membrane depolarization. The anion-binding pocket transits from the inward-open (Down) state, where it is exposed toward the intracellular solvent in the absence of anion, to the occluded (Up) state upon anion binding. Salicylate competes for the anion-binding site and inhibits the voltage-sensor movement, and therefore inhibits the charge transfer and electromotility by displacing Cl(-) from the anion-binding site and by preventing the structural transitions to the contracted state. In addition, can act as a weak Cl(-)/HCO3(-) antiporter across the cell membrane and so regulate the intracellular pH of the outer hair cells (OHCs), while firstly found as being unable to mediate electrogenic anion transport. Moreover, supports a role in cardiac mechanical amplification serving as an elastic element to enhance the actomyosin- based sarcomere contraction system. The chain is Prestin from Mus musculus (Mouse).